Reading from the N-terminus, the 156-residue chain is Arginine repressor (156 aa).

Belongs to the ArgR family.

Its subcellular location is the cytoplasm. The protein operates within amino-acid biosynthesis; L-arginine biosynthesis [regulation]. Its function is as follows. Regulates arginine biosynthesis genes. This chain is Arginine repressor, found in Escherichia coli O81 (strain ED1a).